The primary structure comprises 208 residues: Ribosomal RNA large subunit methyltransferase E (208 aa).

Residues Gly-62, Trp-64, Asp-82, Asp-98, and Asp-123 each coordinate S-adenosyl-L-methionine. Lys-163 (proton acceptor) is an active-site residue.

Belongs to the class I-like SAM-binding methyltransferase superfamily. RNA methyltransferase RlmE family.

It localises to the cytoplasm. The enzyme catalyses uridine(2552) in 23S rRNA + S-adenosyl-L-methionine = 2'-O-methyluridine(2552) in 23S rRNA + S-adenosyl-L-homocysteine + H(+). Its function is as follows. Specifically methylates the uridine in position 2552 of 23S rRNA at the 2'-O position of the ribose in the fully assembled 50S ribosomal subunit. In Idiomarina loihiensis (strain ATCC BAA-735 / DSM 15497 / L2-TR), this protein is Ribosomal RNA large subunit methyltransferase E.